The following is a 424-amino-acid chain: MARKIQAIRGMNDILPDQSSVWLYLEKTVADVVKSYGYQQIRFPIVENTDLFKRGVGETTDIVEKEMYTFDDRNGESLTLRPEGTASCVRAADQAGLLFNQTQRLWYTGPMFRYERPQKGRYRQFHQIGVESFGMATADIDAELIILSARLWQKLGLLEHVELQLNTIGLASEREAYKAALVEYLTEFKDQLDEDSQRRLSTNPLRILDSKDESTQAILKNAPNLEDFIGEESQAHFDLLQAILKANGIPYVINRRLVRGLDYYGKTVFEWVTTHLGSQATVCAGGRYDGLVEQLGGKSTPAVGFAMGIERLVLLLETLNLIPDAAKFSTDVFVISMGDDAELASFVLAERLREENSNLVVLRHCGGGNFKNQMKKADRSEARFTIVLGQDEIDKGICQLKDMSTGEQQPHSIDDVATYINAKL.

The protein belongs to the class-II aminoacyl-tRNA synthetase family. As to quaternary structure, homodimer.

Its subcellular location is the cytoplasm. It catalyses the reaction tRNA(His) + L-histidine + ATP = L-histidyl-tRNA(His) + AMP + diphosphate + H(+). The chain is Histidine--tRNA ligase from Marinomonas sp. (strain MWYL1).